Here is a 190-residue protein sequence, read N- to C-terminus: Putative manganese efflux pump MntP (190 aa).

A run of 5 helical transmembrane segments spans residues 37–57, 64–84, 111–131, 135–155, and 164–184; these read LILA…GWGI, LSFI…GVGA, LILG…MAFV, IITL…VGAW, and FGGW…GNIL.

This sequence belongs to the MntP (TC 9.B.29) family.

The protein localises to the cell membrane. Probably functions as a manganese efflux pump. This Corynebacterium efficiens (strain DSM 44549 / YS-314 / AJ 12310 / JCM 11189 / NBRC 100395) protein is Putative manganese efflux pump MntP.